Reading from the N-terminus, the 101-residue chain is uncharacterized protein (101 aa).

2 consecutive transmembrane segments (helical) span residues 3–23 and 68–88; these read IIGS…AIIF and VIVL…IIVI.

Its subcellular location is the cell membrane. This is an uncharacterized protein from Ureaplasma parvum serovar 3 (strain ATCC 700970).